We begin with the raw amino-acid sequence, 147 residues long: Large ribosomal subunit protein uL13 (147 aa).

Belongs to the universal ribosomal protein uL13 family. In terms of assembly, part of the 50S ribosomal subunit.

This protein is one of the early assembly proteins of the 50S ribosomal subunit, although it is not seen to bind rRNA by itself. It is important during the early stages of 50S assembly. This is Large ribosomal subunit protein uL13 from Kineococcus radiotolerans (strain ATCC BAA-149 / DSM 14245 / SRS30216).